Here is a 145-residue protein sequence, read N- to C-terminus: D-aminoacyl-tRNA deacylase (145 aa).

Residues 137-138 (GP) carry the Gly-cisPro motif, important for rejection of L-amino acids motif.

It belongs to the DTD family. As to quaternary structure, homodimer.

It is found in the cytoplasm. It carries out the reaction glycyl-tRNA(Ala) + H2O = tRNA(Ala) + glycine + H(+). The enzyme catalyses a D-aminoacyl-tRNA + H2O = a tRNA + a D-alpha-amino acid + H(+). Its function is as follows. An aminoacyl-tRNA editing enzyme that deacylates mischarged D-aminoacyl-tRNAs. Also deacylates mischarged glycyl-tRNA(Ala), protecting cells against glycine mischarging by AlaRS. Acts via tRNA-based rather than protein-based catalysis; rejects L-amino acids rather than detecting D-amino acids in the active site. By recycling D-aminoacyl-tRNA to D-amino acids and free tRNA molecules, this enzyme counteracts the toxicity associated with the formation of D-aminoacyl-tRNA entities in vivo and helps enforce protein L-homochirality. The chain is D-aminoacyl-tRNA deacylase from Yersinia enterocolitica serotype O:8 / biotype 1B (strain NCTC 13174 / 8081).